Reading from the N-terminus, the 181-residue chain is Adenine phosphoribosyltransferase 1 (181 aa).

It belongs to the purine/pyrimidine phosphoribosyltransferase family. Homodimer.

The protein localises to the cytoplasm. It carries out the reaction AMP + diphosphate = 5-phospho-alpha-D-ribose 1-diphosphate + adenine. It functions in the pathway purine metabolism; AMP biosynthesis via salvage pathway; AMP from adenine: step 1/1. Catalyzes a salvage reaction resulting in the formation of AMP, that is energically less costly than de novo synthesis. The sequence is that of Adenine phosphoribosyltransferase 1 (APT1) from Triticum aestivum (Wheat).